Here is a 1394-residue protein sequence, read N- to C-terminus: Adhesion and penetration protein autotransporter (1394 aa).

Residues 1–25 (MKKTVFRLNFLTACISLGIVSQAWA) form the signal peptide. A Peptidase S6 domain is found at 26–286 (GHTYFGIDYQ…QLVRKSYFDE (261 aa)). Residue Ser243 is part of the active site. Disordered stretches follow at residues 848-870 (AYSA…TPTS) and 995-1027 (TLEA…FPDT). Positions 1140–1394 (VDQAQSAVWT…NVGVKLGYRW (255 aa)) constitute an Autotransporter domain.

The protein localises to the periplasm. The protein resides in the secreted. It is found in the cell surface. It localises to the cell outer membrane. In terms of biological role, probable protease; promotes adherence and invasion by directly binding to a host cell structure. This Haemophilus influenzae protein is Adhesion and penetration protein autotransporter (hap).